The sequence spans 147 residues: Prefoldin subunit alpha (147 aa).

This sequence belongs to the prefoldin alpha subunit family. As to quaternary structure, heterohexamer of two alpha and four beta subunits.

The protein localises to the cytoplasm. Molecular chaperone capable of stabilizing a range of proteins. Seems to fulfill an ATP-independent, HSP70-like function in archaeal de novo protein folding. The polypeptide is Prefoldin subunit alpha (Saccharolobus islandicus (strain M.16.27) (Sulfolobus islandicus)).